The sequence spans 484 residues: Acetaldehyde dehydrogenase (acetylating) (484 aa).

The protein belongs to the aldehyde dehydrogenase family.

The catalysed reaction is acetaldehyde + NAD(+) + CoA = acetyl-CoA + NADH + H(+). It functions in the pathway organosulfur degradation; alkanesulfonate degradation. Functionally, involved in an anaerobic respiration pathway that converts the sulfonate taurine (2-aminoethanesulfonate) to ammonia, acetate and sulfide. Catalyzes the oxidation of acetaldehyde to acetyl-CoA in the presence of CoASH and NAD(+). Highly prefers NAD(+) over NADP(+). The sequence is that of Acetaldehyde dehydrogenase (acetylating) from Bilophila wadsworthia (strain 3_1_6).